Consider the following 449-residue polypeptide: Signal recognition particle protein (449 aa).

GTP-binding positions include 109-116, 191-195, and 249-252; these read GLQGGGKT, DTAGR, and SRID.

The protein belongs to the GTP-binding SRP family. SRP54 subfamily. In terms of assembly, part of the signal recognition particle protein translocation system, which is composed of SRP and FtsY. SRP is a ribonucleoprotein composed of Ffh and a 4.5S RNA molecule.

It is found in the cytoplasm. It catalyses the reaction GTP + H2O = GDP + phosphate + H(+). Its function is as follows. Involved in targeting and insertion of nascent membrane proteins into the cytoplasmic membrane. Binds to the hydrophobic signal sequence of the ribosome-nascent chain (RNC) as it emerges from the ribosomes. The SRP-RNC complex is then targeted to the cytoplasmic membrane where it interacts with the SRP receptor FtsY. Interaction with FtsY leads to the transfer of the RNC complex to the Sec translocase for insertion into the membrane, the hydrolysis of GTP by both Ffh and FtsY, and the dissociation of the SRP-FtsY complex into the individual components. In Rickettsia prowazekii (strain Madrid E), this protein is Signal recognition particle protein.